Consider the following 457-residue polypeptide: MSWSILEFLRKNPEELKNNLKRRAIDVSLVDKAVELDKKWRQVLQEVERLRHQHNVLSSQIPKLSGEERKKKIEESKNLLKILEDKEKELEKIEVERDRLLSTLPNLVADDVPNGPDDSYNIPIKFWGKFKVYEGDVEEFLRQTKDANVNYEIIKWKPKGHAEMLEDVLHLGNTLKAAEIAGSRFYYLFNDIVWLDFALLLFAIDYITQQGYTLVLPPYMLRGEVIQSVIDLDTFKDAIYKIENEDLYLIATAEHSIAAMFFKEEIEKDKLPLKFAGISPAFRKEAGAANKDLKGIFRVHQFHKVEQFIFSTPEDSWKYHAELITNAESIFQQLELPYRIVNIASGDLGACAAKKFDLEVWMPAQAKFREMVSCSNCTDWQAFRMKIRYVDRKNNKRGYVHTLNSTAIASTRTITAILENYQREDGVVEVPKVLRKYLEIFPKAPKDYIYPLKNKII.

Residue 252–254 participates in L-serine binding; that stretch reads TAE. ATP-binding positions include 283–285 and Val299; that span reads RKE. Glu306 is a binding site for L-serine. 370-373 lines the ATP pocket; the sequence is EMVS. Thr406 is an L-serine binding site.

Belongs to the class-II aminoacyl-tRNA synthetase family. Type-1 seryl-tRNA synthetase subfamily. Homodimer. The tRNA molecule binds across the dimer.

Its subcellular location is the cytoplasm. The enzyme catalyses tRNA(Ser) + L-serine + ATP = L-seryl-tRNA(Ser) + AMP + diphosphate + H(+). It catalyses the reaction tRNA(Sec) + L-serine + ATP = L-seryl-tRNA(Sec) + AMP + diphosphate + H(+). The protein operates within aminoacyl-tRNA biosynthesis; selenocysteinyl-tRNA(Sec) biosynthesis; L-seryl-tRNA(Sec) from L-serine and tRNA(Sec): step 1/1. Catalyzes the attachment of serine to tRNA(Ser). Is also able to aminoacylate tRNA(Sec) with serine, to form the misacylated tRNA L-seryl-tRNA(Sec), which will be further converted into selenocysteinyl-tRNA(Sec). The protein is Serine--tRNA ligase of Saccharolobus islandicus (strain Y.G.57.14 / Yellowstone #1) (Sulfolobus islandicus).